The chain runs to 748 residues: MEEKSSGGGVRLHVGGLGESVGRDDLLKIFSPMGTVDAVEFVRTKGRSFAYIDFSPSSTNSLTKLFSTYNGCVWKGGRLRLEKAKEHYLARLKREWEAASSTSDNTIKAPSDSPPATHLNIFFPRLRKVKPMPLSGTGKHKYSFQRVPVSSSLPRSFCDCEEHSNSSLTPREIHLHDLEAVNVGRQEAEVNVMNSVMNKLFEKNNVDPEEDNEIEADQDNLIINVASSGNDMDSALDMLSRKRKSILNKKTPSEEGYSEGRKGNLTHPSKNRQTISLEETGRQESSQAIRGKKKPSEVVPDKSSDEPSRTKDLEQSIDNISWSQKSSWKSLMANGNSNDFSVSSFLPGVGSSKAVQPAPRNTDLAGLPSRENLKKKTKRKRVTSTIMAEDLPVSDDIKRDDSDTMADDIERDDSDAVEYYTACESMADDTASDSVAERDDSDAVEDDTAIDSMADDPASDSVAESDDGDAVENDTAIDSMADDTVSNSMAESDDGDNVEDDTAIDSMCDDTANDDVGSDDSGSLADTVSDTSVEAVPLEFVANTEGDSVDGKSNVEKHENVAEDLNAEKESLVVKENVVDEEEAGKGPLKASNKSTGGSSWLQKASWTQLVSDKNTSSFSITQLFPDLTSDKGEAAGVINNVGNQFSNSNQTASAMKQTDYASSSGGFVAAGVPVDSTPVRSLDENRQRLNGKNVSEGAKLGAKKKIIKRKVGSGDTCTFMRSSTSLKEWAKAKKALSEPRRKKNSEE.

In terms of domain architecture, RRM spans 10–86 (VRLHVGGLGE…GRLRLEKAKE (77 aa)). 4 disordered regions span residues 244-318 (KSIL…QSID), 350-531 (GSSK…VSDT), 579-600 (VDEE…GGSS), and 729-748 (EWAK…NSEE). Residues 266 to 288 (THPSKNRQTISLEETGRQESSQA) show a composition bias toward polar residues. A compositionally biased stretch (basic and acidic residues) spans 294–314 (KPSEVVPDKSSDEPSRTKDLE). Positions 373–382 (LKKKTKRKRV) are enriched in basic residues. 3 stretches are compositionally biased toward acidic residues: residues 403 to 416 (DTMA…DSDA), 439 to 472 (DDSD…DAVE), and 491 to 518 (ESDD…DVGS). Residues 520–531 (DSGSLADTVSDT) are compositionally biased toward polar residues.

As to expression, ubiquitously expressed.

The protein localises to the nucleus. Its subcellular location is the nucleolus. It localises to the nucleoplasm. In terms of biological role, RNA-binding protein required for DNA demethylation and to eluviate siRNA-mediated transcriptional gene silencing (TGS), probably by guiding ROS1. Can bind specifically single stranded G-rich RNAs of 21-, 24- or 26-nt corresponding to promoter sequence of target genes; this interaction directs demethylation of target sequences. The protein is Protein REPRESSOR OF SILENCING 3 of Arabidopsis thaliana (Mouse-ear cress).